We begin with the raw amino-acid sequence, 650 residues long: uncharacterized protein (650 aa).

It belongs to the MG032/MG096/MG288 family.

This is an uncharacterized protein from Mycoplasma genitalium (strain ATCC 33530 / DSM 19775 / NCTC 10195 / G37) (Mycoplasmoides genitalium).